Here is an 855-residue protein sequence, read N- to C-terminus: DNA mismatch repair protein MutS (855 aa).

616 to 623 provides a ligand contact to ATP; it reads GPNMGGKS.

It belongs to the DNA mismatch repair MutS family.

Functionally, this protein is involved in the repair of mismatches in DNA. It is possible that it carries out the mismatch recognition step. This protein has a weak ATPase activity. In Salmonella schwarzengrund (strain CVM19633), this protein is DNA mismatch repair protein MutS.